We begin with the raw amino-acid sequence, 361 residues long: Protein Csal_2339 (361 aa).

Residue S91 is the Proton acceptor of the active site. Substrate is bound by residues G92–S93 and G259–T260.

The protein belongs to the proline racemase family.

The enzyme catalyses trans-4-hydroxy-L-proline = cis-4-hydroxy-D-proline. In terms of biological role, in vitro, catalyzes the epimerization of trans-4-hydroxy-L-proline (t4LHyp) to cis-4-hydroxy-D-proline (c4DHyp), albeit with very low efficiency. The physiological substrate may be different. Displays neither proline racemase activity nor t3LHyp dehydratase activity. The polypeptide is Protein Csal_2339 (Chromohalobacter salexigens (strain ATCC BAA-138 / DSM 3043 / CIP 106854 / NCIMB 13768 / 1H11)).